The following is a 275-amino-acid chain: NADPH-dependent 7-cyano-7-deazaguanine reductase (275 aa).

A substrate-binding site is contributed by 81-83 (IES). NADPH is bound at residue 83-84 (SK). Cys-181 acts as the Thioimide intermediate in catalysis. Asp-188 (proton donor) is an active-site residue. 220–221 (HE) is a binding site for substrate. 249 to 250 (RG) provides a ligand contact to NADPH.

Belongs to the GTP cyclohydrolase I family. QueF type 2 subfamily. Homodimer.

It is found in the cytoplasm. The catalysed reaction is 7-aminomethyl-7-carbaguanine + 2 NADP(+) = 7-cyano-7-deazaguanine + 2 NADPH + 3 H(+). Its pathway is tRNA modification; tRNA-queuosine biosynthesis. In terms of biological role, catalyzes the NADPH-dependent reduction of 7-cyano-7-deazaguanine (preQ0) to 7-aminomethyl-7-deazaguanine (preQ1). This chain is NADPH-dependent 7-cyano-7-deazaguanine reductase, found in Xylella fastidiosa (strain M23).